Consider the following 249-residue polypeptide: Zinc import ATP-binding protein ZnuC (249 aa).

Residues 1 to 219 (MRLVSLRNAT…PEYQALFGSG (219 aa)) form the ABC transporter domain. An ATP-binding site is contributed by 36–43 (GPNGSGKS).

This sequence belongs to the ABC transporter superfamily. Zinc importer (TC 3.A.1.15.5) family. As to quaternary structure, the complex is composed of two ATP-binding proteins (ZnuC), two transmembrane proteins (ZnuB) and a solute-binding protein (ZnuA).

It is found in the cell inner membrane. It catalyses the reaction Zn(2+)(out) + ATP(in) + H2O(in) = Zn(2+)(in) + ADP(in) + phosphate(in) + H(+)(in). Its function is as follows. Part of the ABC transporter complex ZnuABC involved in zinc import. Responsible for energy coupling to the transport system. This Ruegeria sp. (strain TM1040) (Silicibacter sp.) protein is Zinc import ATP-binding protein ZnuC.